The following is a 157-amino-acid chain: 2-C-methyl-D-erythritol 2,4-cyclodiphosphate synthase (157 aa).

The a divalent metal cation site is built by aspartate 8 and histidine 10. Residues 8–10 and 34–35 contribute to the 4-CDP-2-C-methyl-D-erythritol 2-phosphate site; these read DVH and HS. Histidine 42 contacts a divalent metal cation. Residues 56-58, 61-65, 100-106, 132-135, phenylalanine 139, and arginine 142 contribute to the 4-CDP-2-C-methyl-D-erythritol 2-phosphate site; these read DIG, FPDTD, AQAPKMA, and TTTE.

This sequence belongs to the IspF family. As to quaternary structure, homotrimer. A divalent metal cation serves as cofactor.

It carries out the reaction 4-CDP-2-C-methyl-D-erythritol 2-phosphate = 2-C-methyl-D-erythritol 2,4-cyclic diphosphate + CMP. It functions in the pathway isoprenoid biosynthesis; isopentenyl diphosphate biosynthesis via DXP pathway; isopentenyl diphosphate from 1-deoxy-D-xylulose 5-phosphate: step 4/6. In terms of biological role, involved in the biosynthesis of isopentenyl diphosphate (IPP) and dimethylallyl diphosphate (DMAPP), two major building blocks of isoprenoid compounds. Catalyzes the conversion of 4-diphosphocytidyl-2-C-methyl-D-erythritol 2-phosphate (CDP-ME2P) to 2-C-methyl-D-erythritol 2,4-cyclodiphosphate (ME-CPP) with a corresponding release of cytidine 5-monophosphate (CMP). This chain is 2-C-methyl-D-erythritol 2,4-cyclodiphosphate synthase, found in Pseudomonas fluorescens (strain Pf0-1).